The sequence spans 1084 residues: Histone deacetylase 4 (1084 aa).

Residues 67–177 (REQQLQQELL…STEVKMKLQE (111 aa)) are a coiled coil. The interaction with MEF2A stretch occupies residues 118 to 313 (MLAMKHQQEL…NNSSGSVSAE (196 aa)). Basic and acidic residues predominate over residues 133–163 (KLERHRQEQELEKQHREQKLQQLKNKEKGKE). Disordered regions lie at residues 133–166 (KLER…ESAV), 206–226 (TQHS…TSYN), and 240–315 (PLRK…AENG). Ser-210 carries the post-translational modification Phosphoserine. Phosphoserine; by CaMK4 and SIK1 is present on Ser-246. Residues 259–274 (KVAERRSSPLLRRKDG) are compositionally biased toward basic and acidic residues. A compositionally biased stretch (low complexity) spans 290–312 (SACSSAPGSGPSSPNNSSGSVSA). The short motif at 349 to 354 (PSLPNI) is the PxLPxI/L motif; mediates interaction with ANKRA2 and 14-3-3 proteins element. Position 350 is a phosphoserine (Ser-350). Ser-467 carries the post-translational modification Phosphoserine; by CaMK4 and SIK1. Disordered regions lie at residues 509-531 (PKPS…ELRE), 548-585 (KEAH…QPSE), and 626-646 (PLSR…VQEP). Basic and acidic residues predominate over residues 516-531 (RQPESHPEETEEELRE). Lys-559 is covalently cross-linked (Glycyl lysine isopeptide (Lys-Gly) (interchain with G-Cter in SUMO)). Ser-565 is modified (phosphoserine). Residues 629–641 (RAQSSPASATFPV) are compositionally biased toward polar residues. Ser-632 bears the Phosphoserine; by CaMK4 mark. Ser-633 carries the phosphoserine modification. Positions 655-1084 (GLVYDTLMLK…EEPMEEEPPL (430 aa)) are histone deacetylase. Zn(2+) contacts are provided by Cys-667, Cys-669, His-675, and Cys-751. The active site involves His-803. The short motif at 1051–1084 (EEAETVTAMASLSVGVKPAEKRPDEEPMEEEPPL) is the Nuclear export signal element. A disordered region spans residues 1061–1084 (SLSVGVKPAEKRPDEEPMEEEPPL).

Belongs to the histone deacetylase family. HD type 2 subfamily. Homodimer. Homodimerization via its N-terminal domain. Interacts with MEF2A. Interacts with MEF2C and MEF2D. Interacts with AHRR. Interacts with NR2C1. Interacts with HDAC7. Interacts with a 14-3-3 chaperone proteins in a phosphorylation dependent manner. Interacts with 14-3-3 protein YWHAB. Interacts with BTBD14B. Interacts with KDM5B. Interacts with MYOCD. Interacts with MORC2. Interacts (via PxLPxI/L motif) with ANKRA2 (via ankyrin repeats). Interacts with CUL7 (as part of the 3M complex); negatively regulated by ANKRA2. Interacts with EP300 in the presence of TFAP2C. Interacts with HSPA1A and HSPA1B leading to their deacetylation at 'Lys-77'. Interacts with ZBTB7B; the interaction allows the recruitment of HDAC4 on CD8 loci for deacetylation and possible inhibition of CD8 genes expression. Interacts with DHX36. Interacts with SIK3; this interaction leads to HDAC4 retention in the cytoplasm. Interacts with ZNF638. In terms of processing, phosphorylated by CaMK4 at Ser-246, Ser-467 and Ser-632. Phosphorylation at other residues by CaMK2D is required for the interaction with 14-3-3. Phosphorylation at Ser-350, within the PxLPxI/L motif, impairs the binding of ANKRA2 but generates a high-affinity docking site for 14-3-3. Sumoylation on Lys-559 is promoted by the E3 SUMO-protein ligase RANBP2, and prevented by phosphorylation by CaMK4. As to expression, ubiquitous.

The protein localises to the nucleus. The protein resides in the cytoplasm. It carries out the reaction N(6)-acetyl-L-lysyl-[histone] + H2O = L-lysyl-[histone] + acetate. Responsible for the deacetylation of lysine residues on the N-terminal part of the core histones (H2A, H2B, H3 and H4). Histone deacetylation gives a tag for epigenetic repression and plays an important role in transcriptional regulation, cell cycle progression and developmental events. Histone deacetylases act via the formation of large multiprotein complexes. Involved in muscle maturation via its interaction with the myocyte enhancer factors such as MEF2A, MEF2C and MEF2D. Involved in the MTA1-mediated epigenetic regulation of ESR1 expression in breast cancer. Deacetylates HSPA1A and HSPA1B at 'Lys-77' leading to their preferential binding to co-chaperone STUB1. In Homo sapiens (Human), this protein is Histone deacetylase 4.